A 177-amino-acid chain; its full sequence is ATP synthase subunit delta (177 aa).

This sequence belongs to the ATPase delta chain family. F-type ATPases have 2 components, F(1) - the catalytic core - and F(0) - the membrane proton channel. F(1) has five subunits: alpha(3), beta(3), gamma(1), delta(1), epsilon(1). F(0) has three main subunits: a(1), b(2) and c(10-14). The alpha and beta chains form an alternating ring which encloses part of the gamma chain. F(1) is attached to F(0) by a central stalk formed by the gamma and epsilon chains, while a peripheral stalk is formed by the delta and b chains.

The protein localises to the cell inner membrane. F(1)F(0) ATP synthase produces ATP from ADP in the presence of a proton or sodium gradient. F-type ATPases consist of two structural domains, F(1) containing the extramembraneous catalytic core and F(0) containing the membrane proton channel, linked together by a central stalk and a peripheral stalk. During catalysis, ATP synthesis in the catalytic domain of F(1) is coupled via a rotary mechanism of the central stalk subunits to proton translocation. Its function is as follows. This protein is part of the stalk that links CF(0) to CF(1). It either transmits conformational changes from CF(0) to CF(1) or is implicated in proton conduction. The protein is ATP synthase subunit delta of Salmonella agona (strain SL483).